The following is a 610-amino-acid chain: UvrABC system protein C (610 aa).

The GIY-YIG domain occupies 12–91 (TSPGVYLYKN…IKQKKPRFNI (80 aa)). Residues 202-237 (SDLKQSLTARMNKAAEGMQFELAAKYRDLITTVEDL) enclose the UVR domain.

It belongs to the UvrC family. In terms of assembly, interacts with UvrB in an incision complex.

It is found in the cytoplasm. In terms of biological role, the UvrABC repair system catalyzes the recognition and processing of DNA lesions. UvrC both incises the 5' and 3' sides of the lesion. The N-terminal half is responsible for the 3' incision and the C-terminal half is responsible for the 5' incision. In Koribacter versatilis (strain Ellin345), this protein is UvrABC system protein C.